The following is a 493-amino-acid chain: Phospholipid transfer protein (493 aa).

Positions 1–17 are cleaved as a signal peptide; the sequence is MALFGALFLALLAGAHA. N-linked (GlcNAc...) (complex) asparagine glycosylation occurs at N64. N-linked (GlcNAc...) asparagine glycosylation is present at N94. Residue N117 is glycosylated (N-linked (GlcNAc...) (complex) asparagine). N143 carries an N-linked (GlcNAc...) asparagine glycan. C146 and C185 are oxidised to a cystine. The N-linked (GlcNAc...) (complex) asparagine glycan is linked to N245. N398 is a glycosylation site (N-linked (GlcNAc...) asparagine).

The protein belongs to the BPI/LBP/Plunc superfamily. BPI/LBP family. Glycosylation is necessary for secretion and its phospholipid transfer activity. In terms of tissue distribution, widely expressed. Highest level of expression in the ovary, thymus and placenta, with moderate levels found in the pancreas, small intestine, testis, lung and prostrate. Low level expression in the kidney, liver and spleen, with very low levels found in the heart, colon, skeletal muscle, leukocytes and brain. Expressed in the cortical neurons.

Its subcellular location is the secreted. The protein resides in the nucleus. The enzyme catalyses a 1,2-diacyl-sn-glycero-3-phosphocholine(in) = a 1,2-diacyl-sn-glycero-3-phosphocholine(out). It carries out the reaction a 1,2-diacyl-sn-glycero-3-phosphoethanolamine(in) = a 1,2-diacyl-sn-glycero-3-phosphoethanolamine(out). It catalyses the reaction a 1,2-diacyl-sn-glycerol(in) = a 1,2-diacyl-sn-glycerol(out). The catalysed reaction is a 1,2-diacyl-sn-glycero-3-phosphate(in) = a 1,2-diacyl-sn-glycero-3-phosphate(out). The enzyme catalyses a sphingomyelin(in) = a sphingomyelin(out). It carries out the reaction a 1,2-diacyl-sn-glycero-3-phospho-(1'-sn-glycerol)(in) = a 1,2-diacyl-sn-glycero-3-phospho-(1'-sn-glycerol)(out). It catalyses the reaction a 1,2-diacyl-sn-glycero-3-phospho-(1D-myo-inositol)(in) = a 1,2-diacyl-sn-glycero-3-phospho-(1D-myo-inositol)(out). The catalysed reaction is 1-hexadecanoyl-2-(5Z,8Z,11Z,14Z-eicosatetraenoyl)-sn-glycero-3-phosphoethanolamine(in) = 1-hexadecanoyl-2-(5Z,8Z,11Z,14Z-eicosatetraenoyl)-sn-glycero-3-phosphoethanolamine(out). The enzyme catalyses N-(hexadecanoyl)-sphing-4-enine-1-phosphocholine(in) = N-(hexadecanoyl)-sphing-4-enine-1-phosphocholine(out). It carries out the reaction 1,2-dihexadecanoyl-sn-glycero-3-phosphocholine(in) = 1,2-dihexadecanoyl-sn-glycero-3-phosphocholine(out). Mediates the transfer of phospholipids and free cholesterol from triglyceride-rich lipoproteins (low density lipoproteins or LDL and very low density lipoproteins or VLDL) into high-density lipoproteins (HDL) as well as the exchange of phospholipids between triglyceride-rich lipoproteins themselves. Facilitates the transfer of a spectrum of different lipid molecules, including diacylglycerol, phosphatidic acid, sphingomyelin, phosphatidylcholine, phosphatidylinositol, phosphatidylglycerol, cerebroside and phosphatidyl ethanolamine. Plays an important role in HDL remodeling which involves modulating the size and composition of HDL. Also plays a key role in the uptake of cholesterol from peripheral cells and tissues that is subsequently transported to the liver for degradation and excretion. Two distinct forms of PLTP exist in plasma: an active form that can transfer phosphatidylcholine from phospholipid vesicles to HDL, and an inactive form that lacks this capability. The polypeptide is Phospholipid transfer protein (PLTP) (Homo sapiens (Human)).